The sequence spans 72 residues: Translation initiation factor IF-1 (72 aa).

The S1-like domain occupies 1–72 (MSKEDVIELE…TRGRIVWRSK (72 aa)).

This sequence belongs to the IF-1 family. As to quaternary structure, component of the 30S ribosomal translation pre-initiation complex which assembles on the 30S ribosome in the order IF-2 and IF-3, IF-1 and N-formylmethionyl-tRNA(fMet); mRNA recruitment can occur at any time during PIC assembly.

The protein resides in the cytoplasm. Its function is as follows. One of the essential components for the initiation of protein synthesis. Stabilizes the binding of IF-2 and IF-3 on the 30S subunit to which N-formylmethionyl-tRNA(fMet) subsequently binds. Helps modulate mRNA selection, yielding the 30S pre-initiation complex (PIC). Upon addition of the 50S ribosomal subunit IF-1, IF-2 and IF-3 are released leaving the mature 70S translation initiation complex. This chain is Translation initiation factor IF-1, found in Caldicellulosiruptor saccharolyticus (strain ATCC 43494 / DSM 8903 / Tp8T 6331).